Consider the following 662-residue polypeptide: Mitochondrial Rho GTPase 1 (662 aa).

The Cytoplasmic segment spans residues M1 to A634. The Miro 1 domain occupies K3 to H185. GTP contacts are provided by residues G12–S19, D62–S64, and N116–D119. EF-hand domains are found at residues L201–K236 and K330–L365. Ca(2+) contacts are provided by D214, N216, D218, Y220, E225, D343, D345, D347, and E354. Positions R446–D611 constitute a Miro 2 domain. GTP contacts are provided by residues G455–S462, E491–G495, and S560–D563. A helical; Anchor for type IV membrane protein transmembrane segment spans residues L635–F655. The Mitochondrial intermembrane portion of the chain corresponds to K656–K662.

The protein belongs to the mitochondrial Rho GTPase family.

Its subcellular location is the mitochondrion outer membrane. Its function is as follows. Mitochondrial GTPase involved in mitochondrial trafficking. Probably involved in control of anterograde transport of mitochondria and their subcellular distribution. In Saccharomyces cerevisiae (strain ATCC 204508 / S288c) (Baker's yeast), this protein is Mitochondrial Rho GTPase 1 (GEM1).